A 332-amino-acid chain; its full sequence is L-lactate dehydrogenase A chain (332 aa).

Residue A2 is modified to N-acetylalanine. K5 is subject to N6-acetyllysine; alternate. K5 bears the N6-succinyllysine; alternate mark. K14 is subject to N6-acetyllysine. Residue 29-57 (GAVGMACAISILMKDLADELALVDVMEDK) coordinates NAD(+). K57 carries the N6-acetyllysine; alternate modification. K57 participates in a covalent cross-link: Glycyl lysine isopeptide (Lys-Gly) (interchain with G-Cter in SUMO2); alternate. N6-acetyllysine is present on K81. R99 contributes to the NAD(+) binding site. A substrate-binding site is contributed by R106. K118 carries the N6-acetyllysine; alternate modification. K118 carries the N6-succinyllysine; alternate modification. An N6-acetyllysine modification is found at K126. N138 is an NAD(+) binding site. Positions 138 and 169 each coordinate substrate. H193 serves as the catalytic Proton acceptor. 2 positions are modified to N6-acetyllysine: K224 and K232. Y239 bears the Phosphotyrosine mark. Residue K243 is modified to N6-acetyllysine. T248 is a binding site for substrate. A Phosphothreonine modification is found at T309. The residue at position 318 (K318) is an N6-acetyllysine; alternate. N6-succinyllysine; alternate is present on K318. T322 is modified (phosphothreonine).

It belongs to the LDH/MDH superfamily. LDH family. As to quaternary structure, homotetramer. Interacts with PTEN upstream reading frame protein MP31. In terms of processing, ISGylated.

It localises to the cytoplasm. It carries out the reaction (S)-lactate + NAD(+) = pyruvate + NADH + H(+). It functions in the pathway fermentation; pyruvate fermentation to lactate; (S)-lactate from pyruvate: step 1/1. Its function is as follows. Interconverts simultaneously and stereospecifically pyruvate and lactate with concomitant interconversion of NADH and NAD(+). The protein is L-lactate dehydrogenase A chain (Ldha) of Mus musculus (Mouse).